We begin with the raw amino-acid sequence, 339 residues long: Ferrochelatase (339 aa).

Residues histidine 202 and glutamate 283 each coordinate Fe cation.

It belongs to the ferrochelatase family.

The protein resides in the cytoplasm. It catalyses the reaction heme b + 2 H(+) = protoporphyrin IX + Fe(2+). It participates in porphyrin-containing compound metabolism; protoheme biosynthesis; protoheme from protoporphyrin-IX: step 1/1. Its function is as follows. Catalyzes the ferrous insertion into protoporphyrin IX. The protein is Ferrochelatase of Psychrobacter arcticus (strain DSM 17307 / VKM B-2377 / 273-4).